The sequence spans 545 residues: Membrane protein insertase YidC (545 aa).

4 helical membrane-spanning segments follow: residues 350–370 (IIGNWGWAIIVLTIIVKAVLY), 424–444 (LPMLLQIPVFIGLYWALFASV), 461–481 (ADPYYILPIIMAATMFAQTYL), and 498–518 (PLVFSVMFFFFPAGLVLYWVV).

Belongs to the OXA1/ALB3/YidC family. Type 1 subfamily. In terms of assembly, interacts with the Sec translocase complex via SecD. Specifically interacts with transmembrane segments of nascent integral membrane proteins during membrane integration.

The protein localises to the cell inner membrane. Required for the insertion and/or proper folding and/or complex formation of integral membrane proteins into the membrane. Involved in integration of membrane proteins that insert both dependently and independently of the Sec translocase complex, as well as at least some lipoproteins. Aids folding of multispanning membrane proteins. The polypeptide is Membrane protein insertase YidC (Neisseria meningitidis serogroup B (strain ATCC BAA-335 / MC58)).